The primary structure comprises 132 residues: Small ribosomal subunit protein uS8 (132 aa).

The protein belongs to the universal ribosomal protein uS8 family. Part of the 30S ribosomal subunit. Contacts proteins S5 and S12.

In terms of biological role, one of the primary rRNA binding proteins, it binds directly to 16S rRNA central domain where it helps coordinate assembly of the platform of the 30S subunit. The polypeptide is Small ribosomal subunit protein uS8 (Stenotrophomonas maltophilia (strain K279a)).